Here is a 547-residue protein sequence, read N- to C-terminus: G protein-coupled receptor associated sorting protein 3 (547 aa).

2 stretches are compositionally biased toward basic residues: residues 1-10 (MTGTKNKTRA) and 38-48 (AKTRAKAKAKT). Positions 1–53 (MTGTKNKTRAQAKTEKKPVTQAKAGAEREATGVVRPVAKTRAKAKAKTGSKTD) are disordered.

It belongs to the GPRASP family. Homodimer.

The protein localises to the cytoplasm. It localises to the nucleus. Survival and differentiation promoting protein that plays a role in the regulation of neurosynaptogenesis. Induces phosphatase PP2A activity which results in APP dephosphorylation and inhibits BACE1-mediated processing of APP. This chain is G protein-coupled receptor associated sorting protein 3 (GPRASP3), found in Macaca fascicularis (Crab-eating macaque).